The sequence spans 189 residues: Cytidylate kinase (189 aa).

7-15 (GPPGSGKTS) lines the ATP pocket.

The protein belongs to the cytidylate kinase family. Type 2 subfamily.

Its subcellular location is the cytoplasm. It carries out the reaction CMP + ATP = CDP + ADP. It catalyses the reaction dCMP + ATP = dCDP + ADP. The chain is Cytidylate kinase from Saccharolobus islandicus (strain Y.N.15.51 / Yellowstone #2) (Sulfolobus islandicus).